We begin with the raw amino-acid sequence, 177 residues long: ATP synthase subunit delta (177 aa).

The protein belongs to the ATPase delta chain family. F-type ATPases have 2 components, F(1) - the catalytic core - and F(0) - the membrane proton channel. F(1) has five subunits: alpha(3), beta(3), gamma(1), delta(1), epsilon(1). F(0) has three main subunits: a(1), b(2) and c(10-14). The alpha and beta chains form an alternating ring which encloses part of the gamma chain. F(1) is attached to F(0) by a central stalk formed by the gamma and epsilon chains, while a peripheral stalk is formed by the delta and b chains.

Its subcellular location is the cell inner membrane. Its function is as follows. F(1)F(0) ATP synthase produces ATP from ADP in the presence of a proton or sodium gradient. F-type ATPases consist of two structural domains, F(1) containing the extramembraneous catalytic core and F(0) containing the membrane proton channel, linked together by a central stalk and a peripheral stalk. During catalysis, ATP synthesis in the catalytic domain of F(1) is coupled via a rotary mechanism of the central stalk subunits to proton translocation. This protein is part of the stalk that links CF(0) to CF(1). It either transmits conformational changes from CF(0) to CF(1) or is implicated in proton conduction. The chain is ATP synthase subunit delta from Shewanella denitrificans (strain OS217 / ATCC BAA-1090 / DSM 15013).